The sequence spans 551 residues: ETS domain-containing transcription factor ERF (551 aa).

Phosphothreonine occurs at positions 3 and 7. A phosphoserine mark is found at Ser-20 and Ser-24. Positions 27–107 (IQLWHFILEL…KGKRFTYKFN (81 aa)) form a DNA-binding region, ETS. Disordered stretches follow at residues 130–169 (QSAP…SSSS) and 184–304 (GSVS…SHFS). Phosphoserine is present on residues Ser-185 and Ser-190. Positions 239-250 (RGGPEPLSPFPV) are enriched in pro residues. The span at 251–268 (SPLAGPGSLLPPQLSPAL) shows a compositional bias: low complexity. The span at 289-301 (SGGGGPSGSGGGS) shows a compositional bias: gly residues. At Ser-327 the chain carries Phosphoserine. A disordered region spans residues 342-476 (PQRPDKCPLP…KPEPGEAPGV (135 aa)). Residues 348–361 (CPLPPMAPETPPVP) show a composition bias toward pro residues. Positions 362–373 (SSASSSSSSSSS) are enriched in low complexity. The span at 404-413 (GGSGSGGLAE) shows a compositional bias: gly residues. Phosphoserine is present on residues Ser-433 and Ser-437. The span at 433 to 453 (SEGESEEVEVTDISDEDEEDG) shows a compositional bias: acidic residues. Thr-443 bears the Phosphothreonine mark. Ser-446 bears the Phosphoserine mark. Residues Lys-467, Lys-483, and Lys-514 each participate in a glycyl lysine isopeptide (Lys-Gly) (interchain with G-Cter in SUMO2) cross-link. The interval 495–551 (RLEGGGCLSGGPEDEGEDKKVRGDVGPGESGGPLTPRRVSSDLQHATAQLSLEHRDS) is disordered. At Thr-529 the chain carries Phosphothreonine; by MAPK1. Phosphoserine occurs at positions 534, 535, and 551. A compositionally biased stretch (polar residues) spans 535-544 (SDLQHATAQL).

It belongs to the ETS family. Post-translationally, phosphorylated by multiple kinases including MAPK1/ERK2 at THR-529. Phosphorylation regulates the activity of ERF. Expressed along the osteogenic margins of the developing calvarial bones, in a similar distribution to that observed for the master osteogenic regulator RUNX2.

It is found in the nucleus. Functionally, potent transcriptional repressor that binds to the H1 element of the Ets2 promoter. May regulate other genes involved in cellular proliferation. Required for extraembryonic ectoderm differentiation, ectoplacental cone cavity closure, and chorioallantoic attachment. May be important for regulating trophoblast stem cell differentiation. This Mus musculus (Mouse) protein is ETS domain-containing transcription factor ERF (Erf).